Here is a 214-residue protein sequence, read N- to C-terminus: C-type lectin domain family 2 member L (214 aa).

A disordered region spans residues 1 to 56; sequence MEPAREPPSRARPPPPLAARPAPAPAAPRPRSPAEAEARGPEGLLRRSGSGYEGST. Positions 10–31 are enriched in pro residues; that stretch reads RARPPPPLAARPAPAPAAPRPR. Phosphoserine is present on S32. The helical transmembrane segment at 69-89 threads the bilayer; sequence LLLGAIAVLLFAILVVMSILA. Residues 107 to 209 form the C-type lectin domain; it reads YGRKCYFFSE…CLMTRPWVCS (103 aa). Disulfide bonds link C128–C208 and C187–C200.

The protein resides in the membrane. The protein is C-type lectin domain family 2 member L (CLEC2L) of Homo sapiens (Human).